The following is a 346-amino-acid chain: NADH-ubiquinone oxidoreductase chain 2 (346 aa).

Transmembrane regions (helical) follow at residues 25–45 (NLLL…PLLA), 56–76 (ATKY…VIIL), 94–114 (LLNM…FHYW), 122–142 (IPLH…LSIL), 148–168 (LLNP…GAWG), 178–198 (IMAY…PYNP), 200–220 (LTLL…ITLM), 240–260 (ILTM…LTGF), 278–298 (LSTL…RLIY), and 325–345 (FILP…SQLI).

It belongs to the complex I subunit 2 family. As to quaternary structure, core subunit of respiratory chain NADH dehydrogenase (Complex I) which is composed of 45 different subunits. Interacts with TMEM242.

Its subcellular location is the mitochondrion inner membrane. It catalyses the reaction a ubiquinone + NADH + 5 H(+)(in) = a ubiquinol + NAD(+) + 4 H(+)(out). In terms of biological role, core subunit of the mitochondrial membrane respiratory chain NADH dehydrogenase (Complex I) which catalyzes electron transfer from NADH through the respiratory chain, using ubiquinone as an electron acceptor. Essential for the catalytic activity and assembly of complex I. The protein is NADH-ubiquinone oxidoreductase chain 2 of Rattus norvegicus (Rat).